A 210-amino-acid chain; its full sequence is Dynactin-associated protein (210 aa).

Over 1 to 113 (MVADIKGNEQ…YCRNDWSMWK (113 aa)) the chain is Cytoplasmic. The helical; Signal-anchor for type II membrane protein transmembrane segment at 114–134 (VFLACLLACVIMTAIGVLIIC) threads the bilayer. The Extracellular portion of the chain corresponds to 135 to 210 (LVNNKGSANS…PITVAPTDHL (76 aa)). A disordered region spans residues 168–210 (ACPPTMTTTSTVPASTATESTTSTATAATTSTEPITVAPTDHL). Low complexity predominate over residues 171-203 (PTMTTTSTVPASTATESTTSTATAATTSTEPIT).

Interacts with DCTN1 and DCTN2. Expressed in fibroblast and numerous cancer cell lines (at protein level).

It localises to the golgi apparatus membrane. Its subcellular location is the cell membrane. Plays a role in the regulation of cell proliferation. Promotes activation of the AKT1 signaling pathway. Promotes phosphorylation of AKT1 at 'Ser-473'. This chain is Dynactin-associated protein (DYNAP), found in Homo sapiens (Human).